A 101-amino-acid chain; its full sequence is Large ribosomal subunit protein bL28 (101 aa).

This sequence belongs to the bacterial ribosomal protein bL28 family.

This is Large ribosomal subunit protein bL28 from Rhodopseudomonas palustris (strain BisB18).